Reading from the N-terminus, the 154-residue chain is ATP synthase subunit b (154 aa).

Residues 5 to 27 traverse the membrane as a helical segment; that stretch reads LLGQAIAFTLFVWFCMKYVWPPI.

It belongs to the ATPase B chain family. As to quaternary structure, F-type ATPases have 2 components, F(1) - the catalytic core - and F(0) - the membrane proton channel. F(1) has five subunits: alpha(3), beta(3), gamma(1), delta(1), epsilon(1). F(0) has three main subunits: a(1), b(2) and c(10-14). The alpha and beta chains form an alternating ring which encloses part of the gamma chain. F(1) is attached to F(0) by a central stalk formed by the gamma and epsilon chains, while a peripheral stalk is formed by the delta and b chains.

Its subcellular location is the cell inner membrane. In terms of biological role, f(1)F(0) ATP synthase produces ATP from ADP in the presence of a proton or sodium gradient. F-type ATPases consist of two structural domains, F(1) containing the extramembraneous catalytic core and F(0) containing the membrane proton channel, linked together by a central stalk and a peripheral stalk. During catalysis, ATP synthesis in the catalytic domain of F(1) is coupled via a rotary mechanism of the central stalk subunits to proton translocation. Its function is as follows. Component of the F(0) channel, it forms part of the peripheral stalk, linking F(1) to F(0). The polypeptide is ATP synthase subunit b (Aliivibrio fischeri (strain ATCC 700601 / ES114) (Vibrio fischeri)).